We begin with the raw amino-acid sequence, 251 residues long: 1-(5-phosphoribosyl)-5-[(5-phosphoribosylamino)methylideneamino] imidazole-4-carboxamide isomerase (251 aa).

The Proton acceptor role is filled by Asp-8. Asp-131 (proton donor) is an active-site residue.

Belongs to the HisA/HisF family.

The protein resides in the cytoplasm. The enzyme catalyses 1-(5-phospho-beta-D-ribosyl)-5-[(5-phospho-beta-D-ribosylamino)methylideneamino]imidazole-4-carboxamide = 5-[(5-phospho-1-deoxy-D-ribulos-1-ylimino)methylamino]-1-(5-phospho-beta-D-ribosyl)imidazole-4-carboxamide. Its pathway is amino-acid biosynthesis; L-histidine biosynthesis; L-histidine from 5-phospho-alpha-D-ribose 1-diphosphate: step 4/9. This Burkholderia pseudomallei (strain 1710b) protein is 1-(5-phosphoribosyl)-5-[(5-phosphoribosylamino)methylideneamino] imidazole-4-carboxamide isomerase.